Consider the following 32-residue polypeptide: uncharacterized protein (32 aa).

This is an uncharacterized protein from Haemophilus influenzae (strain ATCC 51907 / DSM 11121 / KW20 / Rd).